Here is a 169-residue protein sequence, read N- to C-terminus: Sec-independent protein translocase protein TatB (169 aa).

A helical transmembrane segment spans residues 1–21 (MFDIGFLELAVIAVIGLIVIG). The tract at residues 98–169 (EAEEAKLQTP…TTKTEPANDR (72 aa)) is disordered. Over residues 134 to 143 (PPEEPSKVEA) the composition is skewed to basic and acidic residues. Positions 146–169 (SAETPQANNQDQQPTTKTEPANDR) are enriched in polar residues.

This sequence belongs to the TatB family. In terms of assembly, the Tat system comprises two distinct complexes: a TatABC complex, containing multiple copies of TatA, TatB and TatC subunits, and a separate TatA complex, containing only TatA subunits. Substrates initially bind to the TatABC complex, which probably triggers association of the separate TatA complex to form the active translocon.

It is found in the cell inner membrane. Part of the twin-arginine translocation (Tat) system that transports large folded proteins containing a characteristic twin-arginine motif in their signal peptide across membranes. Together with TatC, TatB is part of a receptor directly interacting with Tat signal peptides. TatB may form an oligomeric binding site that transiently accommodates folded Tat precursor proteins before their translocation. The sequence is that of Sec-independent protein translocase protein TatB from Saccharophagus degradans (strain 2-40 / ATCC 43961 / DSM 17024).